The following is a 143-amino-acid chain: ATP synthase epsilon chain (143 aa).

It belongs to the ATPase epsilon chain family. As to quaternary structure, F-type ATPases have 2 components, CF(1) - the catalytic core - and CF(0) - the membrane proton channel. CF(1) has five subunits: alpha(3), beta(3), gamma(1), delta(1), epsilon(1). CF(0) has three main subunits: a, b and c.

Its subcellular location is the cell membrane. Produces ATP from ADP in the presence of a proton gradient across the membrane. In Lacticaseibacillus casei (strain BL23) (Lactobacillus casei), this protein is ATP synthase epsilon chain.